We begin with the raw amino-acid sequence, 382 residues long: Quinolinate synthase (382 aa).

Positions 63 and 84 each coordinate iminosuccinate. Cysteine 129 contributes to the [4Fe-4S] cluster binding site. Iminosuccinate is bound by residues 155-157 and serine 172; that span reads YAN. Cysteine 216 serves as a coordination point for [4Fe-4S] cluster. Iminosuccinate is bound by residues 242 to 244 and threonine 259; that span reads HPE. Cysteine 313 is a binding site for [4Fe-4S] cluster.

This sequence belongs to the quinolinate synthase family. Type 1 subfamily. [4Fe-4S] cluster serves as cofactor.

It is found in the cytoplasm. The enzyme catalyses iminosuccinate + dihydroxyacetone phosphate = quinolinate + phosphate + 2 H2O + H(+). It functions in the pathway cofactor biosynthesis; NAD(+) biosynthesis; quinolinate from iminoaspartate: step 1/1. In terms of biological role, catalyzes the condensation of iminoaspartate with dihydroxyacetone phosphate to form quinolinate. This chain is Quinolinate synthase, found in Ralstonia pickettii (strain 12J).